Here is a 524-residue protein sequence, read N- to C-terminus: Ribonuclease Y (524 aa).

The helical transmembrane segment at 3–23 (IVINLFLLVPASIVFFAAGFF) threads the bilayer. The disordered stretch occupies residues 96–127 (QQREGQLKKQAQDNRDMERRLQDQRKENEQVQ). Residues 100–124 (GQLKKQAQDNRDMERRLQDQRKENE) are compositionally biased toward basic and acidic residues. The KH domain occupies 214-280 (ALSVVHIQTD…KLTLQKLLSE (67 aa)). The HD domain maps to 340 to 432 (LLQHSREVAM…VDAANVISLS (93 aa)).

It belongs to the RNase Y family.

The protein localises to the cell membrane. Its function is as follows. Endoribonuclease that initiates mRNA decay. The polypeptide is Ribonuclease Y (Chlorobium phaeovibrioides (strain DSM 265 / 1930) (Prosthecochloris vibrioformis (strain DSM 265))).